A 341-amino-acid chain; its full sequence is tRNA N6-adenosine threonylcarbamoyltransferase (341 aa).

Positions 111 and 115 each coordinate Fe cation. Substrate contacts are provided by residues Leu134–Gly138, Asp167, Gly180, and Asn276. Asp304 is a binding site for Fe cation.

Belongs to the KAE1 / TsaD family. The cofactor is Fe(2+).

The protein resides in the cytoplasm. It catalyses the reaction L-threonylcarbamoyladenylate + adenosine(37) in tRNA = N(6)-L-threonylcarbamoyladenosine(37) in tRNA + AMP + H(+). Functionally, required for the formation of a threonylcarbamoyl group on adenosine at position 37 (t(6)A37) in tRNAs that read codons beginning with adenine. Is involved in the transfer of the threonylcarbamoyl moiety of threonylcarbamoyl-AMP (TC-AMP) to the N6 group of A37, together with TsaE and TsaB. TsaD likely plays a direct catalytic role in this reaction. The polypeptide is tRNA N6-adenosine threonylcarbamoyltransferase (Azotobacter vinelandii (strain DJ / ATCC BAA-1303)).